A 703-amino-acid chain; its full sequence is Elongation factor G (703 aa).

Positions 9–292 constitute a tr-type G domain; the sequence is ERTRNIGIMA…AVVDYLPGPL (284 aa). GTP contacts are provided by residues 18 to 25, 91 to 95, and 145 to 148; these read AHIDAGKT, DTPGH, and NKMD.

Belongs to the TRAFAC class translation factor GTPase superfamily. Classic translation factor GTPase family. EF-G/EF-2 subfamily.

The protein localises to the cytoplasm. Functionally, catalyzes the GTP-dependent ribosomal translocation step during translation elongation. During this step, the ribosome changes from the pre-translocational (PRE) to the post-translocational (POST) state as the newly formed A-site-bound peptidyl-tRNA and P-site-bound deacylated tRNA move to the P and E sites, respectively. Catalyzes the coordinated movement of the two tRNA molecules, the mRNA and conformational changes in the ribosome. This chain is Elongation factor G, found in Leuconostoc mesenteroides subsp. mesenteroides (strain ATCC 8293 / DSM 20343 / BCRC 11652 / CCM 1803 / JCM 6124 / NCDO 523 / NBRC 100496 / NCIMB 8023 / NCTC 12954 / NRRL B-1118 / 37Y).